A 555-amino-acid chain; its full sequence is Putative protein NRT1/ PTR FAMILY 2.14 (555 aa).

Helical transmembrane passes span 62–82 (VTLINTWSALTNFAPIIGAFI), 93–113 (IVFGSIAELLGMLVLTFTSLV), 135–155 (YSQLYVLLSGLFLLSVGTGGI), 181–201 (FFSWYYTTHTIVQLVSMTLVL), 209–229 (WGIGFAIPTVLNFFALLLLFV), 234–254 (YVFVKPEGSVFSGVFKVLVAA), 319–339 (IKSIISIIPIFASSIIGFLAM), 363–383 (LIPPASITVISLLNIGIWLPF), 405–425 (LQKVGIGNIFSISTMLISGIV), 441–461 (VFWLTPQQVLMGFYQVFTIVG), 480–500 (SLLYLGLSLASYLSSAMVSIV), and 523–543 (CFYYFIAALSTLNFIFFFWCA).

Belongs to the major facilitator superfamily. Proton-dependent oligopeptide transporter (POT/PTR) (TC 2.A.17) family. In terms of tissue distribution, not detected.

The protein resides in the membrane. This chain is Putative protein NRT1/ PTR FAMILY 2.14 (NPF2.14), found in Arabidopsis thaliana (Mouse-ear cress).